The primary structure comprises 1099 residues: Mediator of RNA polymerase II transcription subunit 5 (1099 aa).

The interval 41–66 is disordered; sequence DNDDAKTQEGSGSQDKTDVEESISKP.

It belongs to the Mediator complex subunit 5 family. In terms of assembly, component of the Mediator complex.

It is found in the nucleus. Functionally, component of the Mediator complex, a coactivator involved in the regulated transcription of nearly all RNA polymerase II-dependent genes. Mediator functions as a bridge to convey information from gene-specific regulatory proteins to the basal RNA polymerase II transcription machinery. Mediator is recruited to promoters by direct interactions with regulatory proteins and serves as a scaffold for the assembly of a functional preinitiation complex with RNA polymerase II and the general transcription factors. In Candida glabrata (strain ATCC 2001 / BCRC 20586 / JCM 3761 / NBRC 0622 / NRRL Y-65 / CBS 138) (Yeast), this protein is Mediator of RNA polymerase II transcription subunit 5 (NUT1).